A 324-amino-acid polypeptide reads, in one-letter code: Probable UDP-sugar transporter protein SLC35A4 (324 aa).

The Cytoplasmic portion of the chain corresponds to 1–18; the sequence is MSVEDGGMPGLGRPRQAR. The helical transmembrane segment at 19-39 threads the bilayer; that stretch reads WTLMLLLSTAMYGAHAPLLAL. At 40–52 the chain is on the lumenal side; the sequence is CHVDGRVPFRPSS. A helical transmembrane segment spans residues 53-73; that stretch reads AVLLTELTKLLLCAFSLLVGW. At 74–85 the chain is on the cytoplasmic side; that stretch reads QAWPQGPPPWRQ. Residues 86–106 form a helical membrane-spanning segment; that stretch reads AAPFALSALLYGANNNLVIYL. The Lumenal segment spans residues 107–142; it reads QRYMDPSTYQVLSNLKIGSTAVLYCLCLRHRLSVRQ. A helical membrane pass occupies residues 143 to 163; sequence GLALLLLMAAGACYAAGGLQV. The Cytoplasmic portion of the chain corresponds to 164-180; it reads PGNTLPSPPPAAAASPM. The chain crosses the membrane as a helical span at residues 181 to 201; the sequence is PLHITPLGLLLLILYCLISGL. At 202-214 the chain is on the lumenal side; that stretch reads SSVYTELLMKRQR. A helical membrane pass occupies residues 215–235; it reads LPLALQNLFLYTFGVLLNLGL. The Cytoplasmic portion of the chain corresponds to 236 to 250; sequence HAGGGSGPGLLEGFS. Residues 251 to 271 form a helical membrane-spanning segment; sequence GWAALVVLSQALNGLLMSAVM. The Lumenal segment spans residues 272–275; the sequence is KHGS. Residues 276-298 form a helical membrane-spanning segment; it reads SITRLFVVSCSLVVNAVLSAVLL. Residues 299-324 lie on the Cytoplasmic side of the membrane; it reads RLQLTAAFFLATLLIGLAMRLYYGSR.

Belongs to the nucleotide-sugar transporter family. SLC35A subfamily. In terms of assembly, found in a complex with SLC35A2 and SLC35A3.

Its subcellular location is the golgi apparatus membrane. It carries out the reaction CDP-L-ribitol(in) + CDP(out) = CDP-L-ribitol(out) + CDP(in). In terms of biological role, mediates the transport of CDP-ribitol. Does not exhibit CMP-sialic acid, UDP-galactose and UDP-N-acetylglucosamine transport activity. The polypeptide is Probable UDP-sugar transporter protein SLC35A4 (Homo sapiens (Human)).